The following is a 40-amino-acid chain: Photosystem II reaction center protein J (40 aa).

The chain crosses the membrane as a helical span at residues 8–28; it reads IPLWLIGTVTGIPVIGSMGIF.

The protein belongs to the PsbJ family. In terms of assembly, PSII is composed of 1 copy each of membrane proteins PsbA, PsbB, PsbC, PsbD, PsbE, PsbF, PsbH, PsbI, PsbJ, PsbK, PsbL, PsbM, PsbT, PsbX, PsbY, PsbZ, Psb30/Ycf12, at least 3 peripheral proteins of the oxygen-evolving complex and a large number of cofactors. It forms dimeric complexes.

Its subcellular location is the plastid. It is found in the chloroplast thylakoid membrane. In terms of biological role, one of the components of the core complex of photosystem II (PSII). PSII is a light-driven water:plastoquinone oxidoreductase that uses light energy to abstract electrons from H(2)O, generating O(2) and a proton gradient subsequently used for ATP formation. It consists of a core antenna complex that captures photons, and an electron transfer chain that converts photonic excitation into a charge separation. The polypeptide is Photosystem II reaction center protein J (Illicium oligandrum (Star anise)).